The sequence spans 246 residues: UDP-N-acetyl-D-mannosaminuronic acid transferase (246 aa).

It belongs to the glycosyltransferase 26 family.

It catalyses the reaction UDP-N-acetyl-alpha-D-mannosaminouronate + N-acetyl-alpha-D-glucosaminyl-di-trans,octa-cis-undecaprenyl diphosphate = beta-D-ManNAcA-(1-&gt;4)-alpha-D-GlcNAc-di-trans,octa-cis-undecaprenyl diphosphate + UDP + H(+). It functions in the pathway bacterial outer membrane biogenesis; enterobacterial common antigen biosynthesis. Functionally, catalyzes the synthesis of Und-PP-GlcNAc-ManNAcA (Lipid II), the second lipid-linked intermediate involved in enterobacterial common antigen (ECA) synthesis. This chain is UDP-N-acetyl-D-mannosaminuronic acid transferase, found in Salmonella schwarzengrund (strain CVM19633).